Reading from the N-terminus, the 454-residue chain is UPF0210 protein Ppro_0613 (454 aa).

Belongs to the UPF0210 family. In terms of assembly, homodimer.

The polypeptide is UPF0210 protein Ppro_0613 (Pelobacter propionicus (strain DSM 2379 / NBRC 103807 / OttBd1)).